A 275-amino-acid polypeptide reads, in one-letter code: tRNA pseudouridine synthase A (275 aa).

The active-site Nucleophile is the aspartate 72. Tyrosine 133 is a substrate binding site.

The protein belongs to the tRNA pseudouridine synthase TruA family. Homodimer.

The catalysed reaction is uridine(38/39/40) in tRNA = pseudouridine(38/39/40) in tRNA. Its function is as follows. Formation of pseudouridine at positions 38, 39 and 40 in the anticodon stem and loop of transfer RNAs. This chain is tRNA pseudouridine synthase A, found in Gluconobacter oxydans (strain 621H) (Gluconobacter suboxydans).